Reading from the N-terminus, the 510-residue chain is Histidine ammonia-lyase (510 aa).

The segment at residues Ala144–Gly146 is a cross-link (5-imidazolinone (Ala-Gly)). Ser145 is subject to 2,3-didehydroalanine (Ser).

This sequence belongs to the PAL/histidase family. In terms of processing, contains an active site 4-methylidene-imidazol-5-one (MIO), which is formed autocatalytically by cyclization and dehydration of residues Ala-Ser-Gly.

It is found in the cytoplasm. It catalyses the reaction L-histidine = trans-urocanate + NH4(+). It participates in amino-acid degradation; L-histidine degradation into L-glutamate; N-formimidoyl-L-glutamate from L-histidine: step 1/3. In Chromobacterium violaceum (strain ATCC 12472 / DSM 30191 / JCM 1249 / CCUG 213 / NBRC 12614 / NCIMB 9131 / NCTC 9757 / MK), this protein is Histidine ammonia-lyase.